Here is a 601-residue protein sequence, read N- to C-terminus: Ribosomal oxygenase 1 (601 aa).

Residues 1–11 (MAACGAEERQR) show a composition bias toward basic and acidic residues. A disordered region spans residues 1-149 (MAACGAEERQ…PGGGGVPGLL (149 aa)). The span at 61–70 (ERAAPPQGAA) shows a compositional bias: low complexity. The span at 73–87 (DRVERAGSSEAKQGD) shows a compositional bias: basic and acidic residues. The 146-residue stretch at 254–399 (CSLRLLSPQA…DFLEKLLPAA (146 aa)) folds into the JmjC domain. Fe cation contacts are provided by histidine 300, aspartate 302, and histidine 365.

It belongs to the ROX family. NO66 subfamily. Fe(2+) is required as a cofactor.

It is found in the nucleus. The protein resides in the nucleolus. The protein localises to the nucleoplasm. It catalyses the reaction N(6),N(6)-dimethyl-L-lysyl(36)-[histone H3] + 2 2-oxoglutarate + 2 O2 = L-lysyl(36)-[histone H3] + 2 formaldehyde + 2 succinate + 2 CO2. The catalysed reaction is N(6)-methyl-L-lysyl-[protein] + 2-oxoglutarate + O2 = L-lysyl-[protein] + formaldehyde + succinate + CO2. It carries out the reaction L-histidyl-[protein] + 2-oxoglutarate + O2 = (3S)-3-hydroxy-L-histidyl-[protein] + succinate + CO2. In terms of biological role, oxygenase that can act as both a histone lysine demethylase and a ribosomal histidine hydroxylase. Specifically demethylates 'Lys-4' (H3K4me) and 'Lys-36' (H3K36me) of histone H3, thereby playing a central role in histone code. Preferentially demethylates trimethylated H3 'Lys-4' (H3K4me3) and monomethylated H3 'Lys-4' (H3K4me1) residues, while it has weaker activity for dimethylated H3 'Lys-36' (H3K36me2). Also catalyzes demethylation of non-histone proteins. Also catalyzes the hydroxylation of 60S ribosomal protein L8 on 'His-216', thereby playing a role in ribosome biogenesis. The polypeptide is Ribosomal oxygenase 1 (RIOX1) (Gallus gallus (Chicken)).